Reading from the N-terminus, the 237-residue chain is Ribonuclease PH (237 aa).

Residues Arg86 and 124-126 each bind phosphate; that span reads GTR.

The protein belongs to the RNase PH family. As to quaternary structure, homohexameric ring arranged as a trimer of dimers.

It carries out the reaction tRNA(n+1) + phosphate = tRNA(n) + a ribonucleoside 5'-diphosphate. Its function is as follows. Phosphorolytic 3'-5' exoribonuclease that plays an important role in tRNA 3'-end maturation. Removes nucleotide residues following the 3'-CCA terminus of tRNAs; can also add nucleotides to the ends of RNA molecules by using nucleoside diphosphates as substrates, but this may not be physiologically important. Probably plays a role in initiation of 16S rRNA degradation (leading to ribosome degradation) during starvation. This is Ribonuclease PH from Bradyrhizobium sp. (strain ORS 278).